Reading from the N-terminus, the 137-residue chain is Putative pre-16S rRNA nuclease (137 aa).

Belongs to the YqgF nuclease family.

It is found in the cytoplasm. Its function is as follows. Could be a nuclease involved in processing of the 5'-end of pre-16S rRNA. In Bacillus cereus (strain G9842), this protein is Putative pre-16S rRNA nuclease.